An 89-amino-acid polypeptide reads, in one-letter code: Defensin-like protein 103 (89 aa).

An N-terminal signal peptide occupies residues 1-24; sequence MAITRKNLVAFCFTILFIISSIHC. 4 cysteine pairs are disulfide-bonded: Cys46/Cys84, Cys52/Cys75, Cys61/Cys82, and Cys65/Cys83.

This sequence belongs to the DEFL family.

It is found in the secreted. This chain is Defensin-like protein 103, found in Arabidopsis thaliana (Mouse-ear cress).